We begin with the raw amino-acid sequence, 301 residues long: Acetylglutamate kinase (301 aa).

Substrate contacts are provided by residues 68 to 69 (GG), Arg90, and Asn195.

Belongs to the acetylglutamate kinase family. ArgB subfamily.

Its subcellular location is the cytoplasm. The enzyme catalyses N-acetyl-L-glutamate + ATP = N-acetyl-L-glutamyl 5-phosphate + ADP. Its pathway is amino-acid biosynthesis; L-arginine biosynthesis; N(2)-acetyl-L-ornithine from L-glutamate: step 2/4. Catalyzes the ATP-dependent phosphorylation of N-acetyl-L-glutamate. This Ectopseudomonas mendocina (strain ymp) (Pseudomonas mendocina) protein is Acetylglutamate kinase.